The primary structure comprises 1510 residues: Chromosome partition protein MukB (1510 aa).

75-82 serves as a coordination point for ATP; sequence GGNGAGKS. Residues 346–706 are a coiled coil; sequence QHRLVDLSRE…LDEQISRLSQ (361 aa). The segment at 707–824 is flexible hinge; it reads PDGSEDPRLN…EIPLFGCAAR (118 aa). Coiled-coil stretches lie at residues 825–1154 and 1248–1304; these read EKRL…AAKV and IDAI…LQNI.

It belongs to the SMC family. MukB subfamily. Homodimerization via its hinge domain. Binds to DNA via its C-terminal region. Interacts, and probably forms a ternary complex, with MukE and MukF via its C-terminal region. The complex formation is stimulated by calcium or magnesium. Interacts with tubulin-related protein FtsZ.

Its subcellular location is the cytoplasm. It is found in the nucleoid. In terms of biological role, plays a central role in chromosome condensation, segregation and cell cycle progression. Functions as a homodimer, which is essential for chromosome partition. Involved in negative DNA supercoiling in vivo, and by this means organize and compact chromosomes. May achieve or facilitate chromosome segregation by condensation DNA from both sides of a centrally located replisome during cell division. This is Chromosome partition protein MukB from Haemophilus influenzae (strain ATCC 51907 / DSM 11121 / KW20 / Rd).